We begin with the raw amino-acid sequence, 254 residues long: Enolase-phosphatase E1 (254 aa).

2 residues coordinate Mg(2+): aspartate 13 and glutamate 15. Residues serine 127–serine 128 and lysine 173 contribute to the substrate site. Residue aspartate 200 participates in Mg(2+) binding.

It belongs to the HAD-like hydrolase superfamily. MasA/MtnC family. In terms of assembly, monomer. Mg(2+) is required as a cofactor.

Its subcellular location is the cytoplasm. It is found in the nucleus. It carries out the reaction 5-methylsulfanyl-2,3-dioxopentyl phosphate + H2O = 1,2-dihydroxy-5-(methylsulfanyl)pent-1-en-3-one + phosphate. The protein operates within amino-acid biosynthesis; L-methionine biosynthesis via salvage pathway; L-methionine from S-methyl-5-thio-alpha-D-ribose 1-phosphate: step 3/6. It functions in the pathway amino-acid biosynthesis; L-methionine biosynthesis via salvage pathway; L-methionine from S-methyl-5-thio-alpha-D-ribose 1-phosphate: step 4/6. In terms of biological role, bifunctional enzyme that catalyzes the enolization of 2,3-diketo-5-methylthiopentyl-1-phosphate (DK-MTP-1-P) into the intermediate 2-hydroxy-3-keto-5-methylthiopentenyl-1-phosphate (HK-MTPenyl-1-P), which is then dephosphorylated to form the acireductone 1,2-dihydroxy-3-keto-5-methylthiopentene (DHK-MTPene). The polypeptide is Enolase-phosphatase E1 (utr4) (Sclerotinia sclerotiorum (strain ATCC 18683 / 1980 / Ss-1) (White mold)).